A 142-amino-acid chain; its full sequence is ATP synthase epsilon chain (142 aa).

Belongs to the ATPase epsilon chain family. As to quaternary structure, F-type ATPases have 2 components, CF(1) - the catalytic core - and CF(0) - the membrane proton channel. CF(1) has five subunits: alpha(3), beta(3), gamma(1), delta(1), epsilon(1). CF(0) has three main subunits: a, b and c.

Its subcellular location is the cell inner membrane. Its function is as follows. Produces ATP from ADP in the presence of a proton gradient across the membrane. This chain is ATP synthase epsilon chain, found in Histophilus somni (strain 2336) (Haemophilus somnus).